The following is a 210-amino-acid chain: Leucyl/phenylalanyl-tRNA--protein transferase (210 aa).

Belongs to the L/F-transferase family.

The protein localises to the cytoplasm. It carries out the reaction N-terminal L-lysyl-[protein] + L-leucyl-tRNA(Leu) = N-terminal L-leucyl-L-lysyl-[protein] + tRNA(Leu) + H(+). The enzyme catalyses N-terminal L-arginyl-[protein] + L-leucyl-tRNA(Leu) = N-terminal L-leucyl-L-arginyl-[protein] + tRNA(Leu) + H(+). It catalyses the reaction L-phenylalanyl-tRNA(Phe) + an N-terminal L-alpha-aminoacyl-[protein] = an N-terminal L-phenylalanyl-L-alpha-aminoacyl-[protein] + tRNA(Phe). Functionally, functions in the N-end rule pathway of protein degradation where it conjugates Leu, Phe and, less efficiently, Met from aminoacyl-tRNAs to the N-termini of proteins containing an N-terminal arginine or lysine. This chain is Leucyl/phenylalanyl-tRNA--protein transferase, found in Roseobacter denitrificans (strain ATCC 33942 / OCh 114) (Erythrobacter sp. (strain OCh 114)).